A 444-amino-acid chain; its full sequence is Glutamate-1-semialdehyde 2,1-aminomutase (444 aa).

Position 267 is an N6-(pyridoxal phosphate)lysine (K267).

Belongs to the class-III pyridoxal-phosphate-dependent aminotransferase family. HemL subfamily. As to quaternary structure, homodimer. The cofactor is pyridoxal 5'-phosphate.

It is found in the cytoplasm. The enzyme catalyses (S)-4-amino-5-oxopentanoate = 5-aminolevulinate. It participates in porphyrin-containing compound metabolism; protoporphyrin-IX biosynthesis; 5-aminolevulinate from L-glutamyl-tRNA(Glu): step 2/2. In Xylella fastidiosa (strain Temecula1 / ATCC 700964), this protein is Glutamate-1-semialdehyde 2,1-aminomutase.